We begin with the raw amino-acid sequence, 315 residues long: Endolytic peptidoglycan transglycosylase RlpA (315 aa).

The first 19 residues, 1 to 19 (MGLALEKVCFLGVIFLISA), serve as a signal peptide directing secretion. The N-palmitoyl cysteine moiety is linked to residue Cys20. Cys20 carries the S-diacylglycerol cysteine lipid modification. The segment covering 68 to 79 (SDSQDSNTKDQP) has biased composition (basic and acidic residues). The tract at residues 68–92 (SDSQDSNTKDQPLDNGMRDSSSIQR) is disordered. In terms of domain architecture, SPOR spans 242 to 315 (SVSGGKFSLQ…YNQNAVLTRE (74 aa)).

This sequence belongs to the RlpA family.

The protein resides in the cell membrane. Its function is as follows. Lytic transglycosylase with a strong preference for naked glycan strands that lack stem peptides. This chain is Endolytic peptidoglycan transglycosylase RlpA, found in Helicobacter pylori (strain ATCC 700392 / 26695) (Campylobacter pylori).